Here is a 118-residue protein sequence, read N- to C-terminus: DNA mimic protein DMP12 (118 aa).

This sequence belongs to the DMP12-like protein family. As to quaternary structure, monomer. Interacts with the dimeric form of the DNA-binding protein HU.

Acts as a DNA mimic. Interacts with the DNA-binding protein HU and partially prevents the binding of HU protein to DNA by occupying the DNA binding sites on the protein. However, the relatively weak affinity of DMP12 for HU suggests that it may not completely block the HU protein-DNA binding, and that DMP12 is more likely to act as a regulator than a competitive inhibitor. It protects HU protein from limited digestion by trypsin in a limited trypsin digestion assay, suggesting that it may serve to protect the HU protein and improve the stability of unbound HU protein. The sequence is that of DNA mimic protein DMP12 from Neisseria meningitidis serogroup B (strain ATCC BAA-335 / MC58).